A 513-amino-acid polypeptide reads, in one-letter code: MRRIKIFDTTLRDGEQSPGASMSVEEKVEMALMLEDLGVDLIEAGFPVSSPVQFEAVKRVASAVQKPIVVGLARCVEKDIDAVYEALKDRPKDKRMIHVFIATSPIHRKYKLRMEKEEILERIRRYVGYAKQFFDLVEFSAEDASRTEVPFLIEAYKTAIEAGATTINVPDTVGYALPDEFGELIKTLREGVPGIENVDLSVHCHNDLGLAVANSLAAVQNGATQVEVTLNGIGERAGNCALEEFVMILKVRKDKLPYETGIKTELIYPASRLLTHITGLIPSRNKPIVGENVFLHESGIHQDGVLKHRETYEIMKPSDIGRSSETLVLGRHSGKHALRKKLESYGIKLDEETFQKVFEKFTELADRKKEVYDDDLFSIVSEVLREPINGYKLVHFHVHTGNTLLPTAAVVLQVGDEKKEAAEAGNGPVDAIFKAIDKALGIQPKLEEYIIQAVGTGKNAQGEVKLTLRINGELYSGRGVSTDIVEASAIAYINAINKYLIAKGLLRKNGGAE.

Residues 4 to 268 (IKIFDTTLRD…ETGIKTELIY (265 aa)) enclose the Pyruvate carboxyltransferase domain. Mn(2+) contacts are provided by Asp-13, His-203, His-205, and Asn-239. A regulatory domain region spans residues 392-513 (KLVHFHVHTG…GLLRKNGGAE (122 aa)).

Belongs to the alpha-IPM synthase/homocitrate synthase family. LeuA type 1 subfamily. As to quaternary structure, homodimer. It depends on Mn(2+) as a cofactor.

The protein localises to the cytoplasm. It catalyses the reaction 3-methyl-2-oxobutanoate + acetyl-CoA + H2O = (2S)-2-isopropylmalate + CoA + H(+). It participates in amino-acid biosynthesis; L-leucine biosynthesis; L-leucine from 3-methyl-2-oxobutanoate: step 1/4. In terms of biological role, catalyzes the condensation of the acetyl group of acetyl-CoA with 3-methyl-2-oxobutanoate (2-ketoisovalerate) to form 3-carboxy-3-hydroxy-4-methylpentanoate (2-isopropylmalate). The sequence is that of 2-isopropylmalate synthase from Thermotoga petrophila (strain ATCC BAA-488 / DSM 13995 / JCM 10881 / RKU-1).